The primary structure comprises 154 residues: Cyclin-dependent protein kinase inhibitor SMR14 (154 aa).

The disordered stretch occupies residues 1–111; the sequence is MSKIKIFHLF…RPPRKPKAIP (111 aa). Residues 24-37 show a composition bias toward low complexity; sequence SLLVPSKSDSLDSS. Residues 74–83 are compositionally biased toward basic and acidic residues; that stretch reads KWECKDEESP.

In terms of biological role, probable cyclin-dependent protein kinase (CDK) inhibitor that functions as a repressor of mitosis in the endoreduplication cell cycle. In Arabidopsis thaliana (Mouse-ear cress), this protein is Cyclin-dependent protein kinase inhibitor SMR14.